Consider the following 326-residue polypeptide: ELAV-like protein 1 (326 aa).

RRM domains are found at residues 20–98 (TNLI…VARP), 106–186 (ANLY…FAAN), and 244–322 (WCIF…FKTS).

Belongs to the RRM elav family. Interacts (via RRM3) with cirbp. Unable to form oligomers. Part of a ribonucleoprotein (RNP) complex, at least composed of elavl1/elrA and/or elavl2/elrB, igf2bp3/vg1RBP, ddx6/Xp54, ybx2/frgy2, lsm14b/rap55b and, in a subset of RNP complexes, stau1/staufen.

The protein resides in the cytoplasm. The protein localises to the cell cortex. Its function is as follows. RNA-binding protein that binds to the 3'-UTR region of mRNAs and increases their stability. Involved in embryonic stem cells (ESCs) differentiation: preferentially binds mRNAs that are not methylated by N6-methyladenosine (m6A), stabilizing them, promoting ESCs differentiation. Binds to poly-U elements and AU-rich elements (AREs) in the 3'-UTR of target mRNAs. Acts cooperatively with cribp to stabilize AU-rich sequence (ARE)-containing mRNAs. May play a role during gastrulation. Required for the vegetal localization of vg1 mRNA. The chain is ELAV-like protein 1 from Xenopus tropicalis (Western clawed frog).